The chain runs to 176 residues: Oleosin Ara h 14.0103 (176 aa).

Position 2 is an N-acetylalanine; alternate (A2). A run of 3 helical transmembrane segments spans residues 50–70, 75–95, and 96–116; these read IIAV…SGLS, IIGL…IVPA, and VVTI…GLTG. Residues 156 to 176 form a disordered region; sequence KTKDAGQEIQTKAQDVKRSSS.

It belongs to the oleosin family. Expressed in seeds (at protein level).

The protein localises to the lipid droplet. Its subcellular location is the membrane. May have a structural role to stabilize the lipid body during desiccation of the seed by preventing coalescence of the oil. Probably interacts with both lipid and phospholipid moieties of lipid bodies. May also provide recognition signals for specific lipase anchorage in lipolysis during seedling growth. The protein is Oleosin Ara h 14.0103 of Arachis hypogaea (Peanut).